A 243-amino-acid chain; its full sequence is Anti-H(O) lectin 2 (243 aa).

N115 is a glycosylation site (N-linked (GlcNAc...) asparagine). Residues E127 and D129 each contribute to the Mn(2+) site. Positions 129, 136, and 139 each coordinate Ca(2+). 2 residues coordinate Mn(2+): D139 and H144.

This sequence belongs to the leguminous lectin family. Homodimer.

Lactose- or galactose-binding anti-H(O) lectin. In Cytisophyllum sessilifolium (Sessile-leaved cytisus), this protein is Anti-H(O) lectin 2.